We begin with the raw amino-acid sequence, 694 residues long: Elongation factor G (694 aa).

The 280-residue stretch at 9 to 288 (DAIRNIGIMA…VIVKWLPSPL (280 aa)) folds into the tr-type G domain. GTP-binding positions include 18–25 (AHIDAGKT), 82–86 (DTPGH), and 136–139 (NKMD).

It belongs to the TRAFAC class translation factor GTPase superfamily. Classic translation factor GTPase family. EF-G/EF-2 subfamily.

It is found in the cytoplasm. Catalyzes the GTP-dependent ribosomal translocation step during translation elongation. During this step, the ribosome changes from the pre-translocational (PRE) to the post-translocational (POST) state as the newly formed A-site-bound peptidyl-tRNA and P-site-bound deacylated tRNA move to the P and E sites, respectively. Catalyzes the coordinated movement of the two tRNA molecules, the mRNA and conformational changes in the ribosome. In Chlamydia muridarum (strain MoPn / Nigg), this protein is Elongation factor G (fusA).